The following is a 447-amino-acid chain: Rab GDP dissociation inhibitor alpha (447 aa).

It belongs to the Rab GDI family. In terms of assembly, interacts with RHOH. Interacts with the non-phosphorylated forms of RAB1A, RAB3A, RAB5A, RAB5B, RAB5C, RAB8A, RAB8B, RAB10, RAB12, RAB35, and RAB43. Brain; predominant in neural and sensory tissues.

Its subcellular location is the cytoplasm. The protein localises to the golgi apparatus. The protein resides in the trans-Golgi network. Regulates the GDP/GTP exchange reaction of most Rab proteins by inhibiting the dissociation of GDP from them, and the subsequent binding of GTP to them. Promotes the dissociation of GDP-bound Rab proteins from the membrane and inhibits their activation. Promotes the dissociation of RAB1A, RAB3A, RAB5A and RAB10 from membranes. The protein is Rab GDP dissociation inhibitor alpha (GDI1) of Homo sapiens (Human).